The following is a 715-amino-acid chain: Fatty acid oxidation complex subunit alpha (715 aa).

The enoyl-CoA hydratase stretch occupies residues 1-190; sequence MTTTSAFMLN…KAGLVDDVVP (190 aa). The tract at residues 306-715 is 3-hydroxyacyl-CoA dehydrogenase; that stretch reads GPLNSVGILG…WTNGETDQGN (410 aa).

In the N-terminal section; belongs to the enoyl-CoA hydratase/isomerase family. It in the central section; belongs to the 3-hydroxyacyl-CoA dehydrogenase family. Heterotetramer of two alpha chains (FadJ) and two beta chains (FadI).

Its subcellular location is the cytoplasm. The catalysed reaction is a (3S)-3-hydroxyacyl-CoA = a (2E)-enoyl-CoA + H2O. It catalyses the reaction a 4-saturated-(3S)-3-hydroxyacyl-CoA = a (3E)-enoyl-CoA + H2O. The enzyme catalyses a (3S)-3-hydroxyacyl-CoA + NAD(+) = a 3-oxoacyl-CoA + NADH + H(+). It carries out the reaction (3S)-3-hydroxybutanoyl-CoA = (3R)-3-hydroxybutanoyl-CoA. It participates in lipid metabolism; fatty acid beta-oxidation. Catalyzes the formation of a hydroxyacyl-CoA by addition of water on enoyl-CoA. Also exhibits 3-hydroxyacyl-CoA epimerase and 3-hydroxyacyl-CoA dehydrogenase activities. The chain is Fatty acid oxidation complex subunit alpha from Salmonella gallinarum (strain 287/91 / NCTC 13346).